The sequence spans 375 residues: Growth/differentiation factor 8 (375 aa).

Positions 1-23 (MQKLQIFVYIYLFMLLVAGPVDL) are cleaved as a signal peptide. Residues 24–266 (NENSEQKENV…VTDTPKRSRR (243 aa)) constitute a propeptide that is removed on maturation. 2 N-linked (GlcNAc...) asparagine glycosylation sites follow: asparagine 48 and asparagine 71. Disulfide bonds link cysteine 272–cysteine 282, cysteine 281–cysteine 340, cysteine 309–cysteine 372, and cysteine 313–cysteine 374.

It belongs to the TGF-beta family. As to quaternary structure, homodimer; disulfide-linked. Interacts with WFIKKN2, leading to inhibit its activity. Interacts with FSTL3. In terms of processing, synthesized as large precursor molecule that undergoes proteolytic cleavage to generate an N-terminal propeptide and a disulfide linked C-terminal dimer, which is the biologically active molecule. The circulating form consists of a latent complex of the C-terminal dimer and other proteins, including its propeptide, which maintain the C-terminal dimer in a latent, inactive state. Ligand activation requires additional cleavage of the prodomain by a tolloid-like metalloproteinase.

It is found in the secreted. Its function is as follows. Acts specifically as a negative regulator of skeletal muscle growth. The polypeptide is Growth/differentiation factor 8 (MSTN) (Ovis aries (Sheep)).